A 42-amino-acid polypeptide reads, in one-letter code: Large ribosomal subunit protein P2 (42 aa).

It belongs to the eukaryotic ribosomal protein P1/P2 family. As to quaternary structure, P1 and P2 exist as dimers at the large ribosomal subunit. Post-translationally, phosphorylated.

Plays an important role in the elongation step of protein synthesis. In Triticum aestivum (Wheat), this protein is Large ribosomal subunit protein P2.